Here is an 89-residue protein sequence, read N- to C-terminus: Small ribosomal subunit protein uS15 (89 aa).

Over residues 1–18 (MSLDTAEKQKLIENHQVH) the composition is skewed to basic and acidic residues. The disordered stretch occupies residues 1–23 (MSLDTAEKQKLIENHQVHPTDTG).

Belongs to the universal ribosomal protein uS15 family. As to quaternary structure, part of the 30S ribosomal subunit. Forms a bridge to the 50S subunit in the 70S ribosome, contacting the 23S rRNA.

Its function is as follows. One of the primary rRNA binding proteins, it binds directly to 16S rRNA where it helps nucleate assembly of the platform of the 30S subunit by binding and bridging several RNA helices of the 16S rRNA. In terms of biological role, forms an intersubunit bridge (bridge B4) with the 23S rRNA of the 50S subunit in the ribosome. This Prochlorococcus marinus (strain MIT 9301) protein is Small ribosomal subunit protein uS15.